Consider the following 95-residue polypeptide: Envelope glycoprotein N (95 aa).

The first 26 residues, 1-26 (MGLMDIHNAVCSLVIGVAILIATSQA), serve as a signal peptide directing secretion. Residues 27 to 55 (TFVDWGSSITSMGDFWESTCSAVGVSIAF) lie on the Virion surface side of the membrane. A helical transmembrane segment spans residues 56–76 (SSGFSVLFYMGLVAVISALLA). The Intravirion segment spans residues 77 to 95 (GSYHACFRLFTADMFKEEW).

This sequence belongs to the herpesviridae glycoprotein N family. Interacts (via N-terminus) with gM (via N-terminus). The gM-gN heterodimer forms the gCII complex.

The protein localises to the virion membrane. It is found in the host membrane. It localises to the host Golgi apparatus. Its subcellular location is the host trans-Golgi network. In terms of biological role, envelope glycoprotein necessary for proper maturation of gM and modulation of its membrane fusion activity. Also plays a critical role in virion morphogenesis. The chain is Envelope glycoprotein N from Gallus gallus (Chicken).